Reading from the N-terminus, the 65-residue chain is Large ribosomal subunit protein bL32 (65 aa).

The tract at residues 1–45 (MAVQQNKKTPSKRGMRRAHDVLKKPTFSVDFSSGETHRRHHVTPD) is disordered.

The protein belongs to the bacterial ribosomal protein bL32 family.

The polypeptide is Large ribosomal subunit protein bL32 (Nitrosococcus oceani (strain ATCC 19707 / BCRC 17464 / JCM 30415 / NCIMB 11848 / C-107)).